Consider the following 290-residue polypeptide: MNPLANRLAVKMNGIGNEILIVDLRGAGAGVTGPQARAIARTKGLAFDQLMVLEDPRSKGCAAFVTIFNADGSQSAACGNGTRCVAWTLLKDGARDEVLLETAAGRLACRRVSELVFSVEMGRPRLKAAEIPLSRDAPDTSAVDLSFGPADSPILKNPAVVNMGNPHAIFFVEDIGAYDLAAIGPVLEHDPLFPERANISLARIVSPERIELKVWERGVGLTLACGSAACAALVAAARRGLTGRRATVALPGGELDIFWRESDDMVVMTGPVAFEFETRLDPAIFADAAA.

Asn-17, Gln-49, and Asn-69 together coordinate substrate. Residue Cys-78 is the Proton donor of the active site. Substrate contacts are provided by residues 79-80 (GN), Asn-165, Asn-198, and 216-217 (ER). The active-site Proton acceptor is Cys-225. 226 to 227 (GS) serves as a coordination point for substrate.

The protein belongs to the diaminopimelate epimerase family. In terms of assembly, homodimer.

It is found in the cytoplasm. It carries out the reaction (2S,6S)-2,6-diaminopimelate = meso-2,6-diaminopimelate. It participates in amino-acid biosynthesis; L-lysine biosynthesis via DAP pathway; DL-2,6-diaminopimelate from LL-2,6-diaminopimelate: step 1/1. Catalyzes the stereoinversion of LL-2,6-diaminopimelate (L,L-DAP) to meso-diaminopimelate (meso-DAP), a precursor of L-lysine and an essential component of the bacterial peptidoglycan. This chain is Diaminopimelate epimerase, found in Methylocella silvestris (strain DSM 15510 / CIP 108128 / LMG 27833 / NCIMB 13906 / BL2).